The primary structure comprises 289 residues: Pre-mRNA-splicing factor cwf23 (289 aa).

The 66-residue stretch at 9–74 folds into the J domain; it reads DYYELLGINE…QLRKAYDSER (66 aa). Basic and acidic residues predominate over residues 129–148; that stretch reads ESANLRRQRENRLREEQEQS. Disordered stretches follow at residues 129-161 and 269-289; these read ESAN…SKIS and KQKH…TMNA.

This sequence belongs to the DnaJ family. As to quaternary structure, belongs to the 40S cdc5-associated complex (or cwf complex), a spliceosome sub-complex reminiscent of a late-stage spliceosome composed of the U2, U5 and U6 snRNAs and at least brr2, cdc5, cwf2/prp3, cwf3/syf1, cwf4/syf3, cwf5/ecm2, spp42/cwf6, cwf7/spf27, cwf8, cwf9, cwf10, cwf11, cwf12, prp45/cwf13, cwf14, cwf15, cwf16, cwf17, cwf18, cwf19, cwf20, cwf21, cwf22, cwf23, cwf24, cwf25, cwf26, cyp7/cwf27, cwf28, cwf29/ist3, lea1, msl1, prp5/cwf1, prp10, prp12/sap130, prp17, prp22, sap61, sap62, sap114, sap145, slu7, smb1, smd1, smd3, smf1, smg1 and syf2.

The protein localises to the cytoplasm. Its subcellular location is the nucleus. Involved in pre-mRNA splicing. May be involved in endoplasmic reticulum-associated protein degradation (ERAD) and required for growth at low and high temperatures. The protein is Pre-mRNA-splicing factor cwf23 (cwf23) of Schizosaccharomyces pombe (strain 972 / ATCC 24843) (Fission yeast).